Reading from the N-terminus, the 541-residue chain is Chaperonin GroEL (541 aa).

ATP contacts are provided by residues 29-32 (TLGP), 86-90 (DGTTT), G413, 476-478 (NAA), and D492. Positions 521 to 541 (KPEDNPAPAAPAANPGMGGMM) are disordered. A compositionally biased stretch (low complexity) spans 526–535 (PAPAAPAANP).

The protein belongs to the chaperonin (HSP60) family. In terms of assembly, forms a cylinder of 14 subunits composed of two heptameric rings stacked back-to-back. Interacts with the co-chaperonin GroES.

The protein resides in the cytoplasm. It carries out the reaction ATP + H2O + a folded polypeptide = ADP + phosphate + an unfolded polypeptide.. Its function is as follows. Together with its co-chaperonin GroES, plays an essential role in assisting protein folding. The GroEL-GroES system forms a nano-cage that allows encapsulation of the non-native substrate proteins and provides a physical environment optimized to promote and accelerate protein folding. The polypeptide is Chaperonin GroEL (Levilactobacillus brevis (strain ATCC 367 / BCRC 12310 / CIP 105137 / JCM 1170 / LMG 11437 / NCIMB 947 / NCTC 947) (Lactobacillus brevis)).